Reading from the N-terminus, the 474-residue chain is 3-isopropylmalate dehydratase large subunit (474 aa).

[4Fe-4S] cluster is bound by residues C352, C413, and C416.

Belongs to the aconitase/IPM isomerase family. LeuC type 1 subfamily. Heterodimer of LeuC and LeuD. Requires [4Fe-4S] cluster as cofactor.

The enzyme catalyses (2R,3S)-3-isopropylmalate = (2S)-2-isopropylmalate. It functions in the pathway amino-acid biosynthesis; L-leucine biosynthesis; L-leucine from 3-methyl-2-oxobutanoate: step 2/4. Catalyzes the isomerization between 2-isopropylmalate and 3-isopropylmalate, via the formation of 2-isopropylmaleate. This chain is 3-isopropylmalate dehydratase large subunit, found in Pseudomonas syringae pv. syringae (strain B728a).